Reading from the N-terminus, the 354-residue chain is Phosphoribosylformylglycinamidine cyclo-ligase (354 aa).

Belongs to the AIR synthase family.

It localises to the cytoplasm. It catalyses the reaction 2-formamido-N(1)-(5-O-phospho-beta-D-ribosyl)acetamidine + ATP = 5-amino-1-(5-phospho-beta-D-ribosyl)imidazole + ADP + phosphate + H(+). It functions in the pathway purine metabolism; IMP biosynthesis via de novo pathway; 5-amino-1-(5-phospho-D-ribosyl)imidazole from N(2)-formyl-N(1)-(5-phospho-D-ribosyl)glycinamide: step 2/2. The polypeptide is Phosphoribosylformylglycinamidine cyclo-ligase (Marinobacter nauticus (strain ATCC 700491 / DSM 11845 / VT8) (Marinobacter aquaeolei)).